Here is a 123-residue protein sequence, read N- to C-terminus: Large ribosomal subunit protein uL18 (123 aa).

The protein belongs to the universal ribosomal protein uL18 family. In terms of assembly, part of the 50S ribosomal subunit; part of the 5S rRNA/L5/L18/L25 subcomplex. Contacts the 5S and 23S rRNAs.

Its function is as follows. This is one of the proteins that bind and probably mediate the attachment of the 5S RNA into the large ribosomal subunit, where it forms part of the central protuberance. This is Large ribosomal subunit protein uL18 from Bifidobacterium adolescentis (strain ATCC 15703 / DSM 20083 / NCTC 11814 / E194a).